Consider the following 521-residue polypeptide: Bifunctional dihydrofolate reductase-thymidylate synthase (521 aa).

In terms of domain architecture, DHFR spans 17 to 194 (NYQVVVAGTR…IRHSFVSFVR (178 aa)). Residue valine 21 coordinates substrate. NADP(+)-binding positions include alanine 23 and 29–35 (GIGKDGV). Aspartate 43 is a substrate binding site. NADP(+) contacts are provided by residues 67–69 (RKT) and 88–91 (LTRS). Isoleucine 130 is a binding site for substrate. Residue 131–138 (GGGQVLRE) participates in NADP(+) binding. Substrate is bound at residue threonine 151. The tract at residues 197 to 521 (KSVAETHESN…HQKIEMKMAV (325 aa)) is thymidylate synthase. Arginine 258 provides a ligand contact to dUMP. Cysteine 403 is an active-site residue. Residues histidine 404, 422–426 (QRSAD), asparagine 434, and 464–466 (HVY) each bind dUMP.

In the N-terminal section; belongs to the dihydrofolate reductase family. The protein in the C-terminal section; belongs to the thymidylate synthase family.

It catalyses the reaction (6S)-5,6,7,8-tetrahydrofolate + NADP(+) = 7,8-dihydrofolate + NADPH + H(+). The enzyme catalyses dUMP + (6R)-5,10-methylene-5,6,7,8-tetrahydrofolate = 7,8-dihydrofolate + dTMP. It functions in the pathway cofactor biosynthesis; tetrahydrofolate biosynthesis; 5,6,7,8-tetrahydrofolate from 7,8-dihydrofolate: step 1/1. In terms of biological role, bifunctional enzyme. Involved in de novo dTMP biosynthesis. Key enzyme in folate metabolism. Can play two different roles depending on the source of dihydrofolate: de novo synthesis of tetrahydrofolate or recycling of the dihydrofolate released as one of the end products of the TS catalyzed reaction. Catalyzes an essential reaction for de novo glycine and purine synthesis, DNA precursor synthesis, and for the conversion of dUMP to dTMP. This Zea mays (Maize) protein is Bifunctional dihydrofolate reductase-thymidylate synthase (DRTS).